A 195-amino-acid polypeptide reads, in one-letter code: Rubrerythrin (195 aa).

A Ferritin-like diiron domain is found at 1-150; it reads MKSLKGTKTA…KLAKNIEEGK (150 aa). 10 residues coordinate Fe(3+): glutamate 20, glutamate 53, glutamate 98, glutamate 101, glutamate 132, histidine 135, cysteine 162, cysteine 165, cysteine 178, and cysteine 181. The region spanning 157-195 is the Rubredoxin-like domain; it reads VVLWKCGNCGFIWEGAEAPLKCPACLHPQAYFEVFKETY.

As to quaternary structure, homodimer. Possesses two rubredoxin-like centers and two non-sulfur oxo-bridged di-iron centers per dimer. The cofactor is Fe(3+).

Its subcellular location is the cytoplasm. Its function is as follows. May provide oxidative stress protection via catalytic reduction of intracellular hydrogen peroxide. The chain is Rubrerythrin (rbr) from Clostridium perfringens (strain 13 / Type A).